Consider the following 130-residue polypeptide: UPF0713 protein YngL (130 aa).

The next 3 helical transmembrane spans lie at 4 to 25, 62 to 84, and 89 to 111; these read LSFLTFIMLILASYRLTHLIVF, MLNCYWCAGVWCAILIGLGYLFL, and IPLIFILAIAGAQAILETAVGVG.

Belongs to the UPF0713 family.

It is found in the cell membrane. The polypeptide is UPF0713 protein YngL (yngL) (Bacillus subtilis (strain 168)).